A 46-amino-acid polypeptide reads, in one-letter code: Defensin-like protein AX2 (46 aa).

Disulfide bonds link cysteine 3–cysteine 46, cysteine 14–cysteine 34, cysteine 20–cysteine 40, and cysteine 24–cysteine 42.

Leaves and flowers.

In terms of biological role, strong inhibiting activity against C.beticola and other filamentous fungi. Little or no effect against bacteria. The polypeptide is Defensin-like protein AX2 (Beta vulgaris (Sugar beet)).